Reading from the N-terminus, the 217-residue chain is GTP cyclohydrolase-2 (217 aa).

50 to 54 is a binding site for GTP; it reads RIHSE. Cys55, Cys66, and Cys68 together coordinate Zn(2+). Residues Gln71, 93 to 95, and Thr115 contribute to the GTP site; that span reads EGR. Residue Asp127 is the Proton acceptor of the active site. The active-site Nucleophile is Arg129. The GTP site is built by Thr150 and Lys155.

This sequence belongs to the GTP cyclohydrolase II family. The cofactor is Zn(2+).

It catalyses the reaction GTP + 4 H2O = 2,5-diamino-6-hydroxy-4-(5-phosphoribosylamino)-pyrimidine + formate + 2 phosphate + 3 H(+). Its pathway is cofactor biosynthesis; riboflavin biosynthesis; 5-amino-6-(D-ribitylamino)uracil from GTP: step 1/4. Its function is as follows. Catalyzes the conversion of GTP to 2,5-diamino-6-ribosylamino-4(3H)-pyrimidinone 5'-phosphate (DARP), formate and pyrophosphate. This chain is GTP cyclohydrolase-2, found in Actinobacillus succinogenes (strain ATCC 55618 / DSM 22257 / CCUG 43843 / 130Z).